The sequence spans 289 residues: Urease accessory protein UreD (289 aa).

Belongs to the UreD family. As to quaternary structure, ureD, UreF and UreG form a complex that acts as a GTP-hydrolysis-dependent molecular chaperone, activating the urease apoprotein by helping to assemble the nickel containing metallocenter of UreC. The UreE protein probably delivers the nickel.

It is found in the cytoplasm. In terms of biological role, required for maturation of urease via the functional incorporation of the urease nickel metallocenter. The sequence is that of Urease accessory protein UreD from Cupriavidus pinatubonensis (strain JMP 134 / LMG 1197) (Cupriavidus necator (strain JMP 134)).